A 147-amino-acid polypeptide reads, in one-letter code: Hemoglobin subunit gamma (147 aa).

In terms of domain architecture, Globin spans 3 to 147 (HFTAEEKAAI…VANALAYKYH (145 aa)). The heme b site is built by H64 and H93.

The protein belongs to the globin family. In terms of assembly, heterotetramer of two alpha chains and two gamma chains in fetal hemoglobin (Hb F). Red blood cells.

Gamma chains make up the fetal hemoglobin F, in combination with alpha chains. This chain is Hemoglobin subunit gamma (HBG), found in Loxodonta africana (African elephant).